We begin with the raw amino-acid sequence, 228 residues long: 2-C-methyl-D-erythritol 4-phosphate cytidylyltransferase (228 aa).

The protein belongs to the IspD/TarI cytidylyltransferase family. IspD subfamily.

It carries out the reaction 2-C-methyl-D-erythritol 4-phosphate + CTP + H(+) = 4-CDP-2-C-methyl-D-erythritol + diphosphate. It participates in isoprenoid biosynthesis; isopentenyl diphosphate biosynthesis via DXP pathway; isopentenyl diphosphate from 1-deoxy-D-xylulose 5-phosphate: step 2/6. Its function is as follows. Catalyzes the formation of 4-diphosphocytidyl-2-C-methyl-D-erythritol from CTP and 2-C-methyl-D-erythritol 4-phosphate (MEP). The polypeptide is 2-C-methyl-D-erythritol 4-phosphate cytidylyltransferase (Mannheimia succiniciproducens (strain KCTC 0769BP / MBEL55E)).